The sequence spans 128 residues: UPF0102 protein Acry_2261 (128 aa).

Belongs to the UPF0102 family.

The protein is UPF0102 protein Acry_2261 of Acidiphilium cryptum (strain JF-5).